The following is a 391-amino-acid chain: Elongation factor Tu (391 aa).

The tr-type G domain maps to 10–201 (KPHVNIGTIG…AVDDYIPTPE (192 aa)). Residues 19–26 (GHVDHGKT) are G1. Residue 19 to 26 (GHVDHGKT) coordinates GTP. Residue threonine 26 coordinates Mg(2+). The segment at 55–59 (GITIS) is G2. A G3 region spans residues 76 to 79 (DCPG). Residues 76 to 80 (DCPGH) and 131 to 134 (NKCD) each bind GTP. Positions 131–134 (NKCD) are G4. Residues 169-171 (SAL) are G5.

The protein belongs to the TRAFAC class translation factor GTPase superfamily. Classic translation factor GTPase family. EF-Tu/EF-1A subfamily. In terms of assembly, monomer.

It localises to the cytoplasm. It catalyses the reaction GTP + H2O = GDP + phosphate + H(+). GTP hydrolase that promotes the GTP-dependent binding of aminoacyl-tRNA to the A-site of ribosomes during protein biosynthesis. The sequence is that of Elongation factor Tu from Brucella anthropi (strain ATCC 49188 / DSM 6882 / CCUG 24695 / JCM 21032 / LMG 3331 / NBRC 15819 / NCTC 12168 / Alc 37) (Ochrobactrum anthropi).